Reading from the N-terminus, the 165-residue chain is Austinoid biosynthesis cluster protein J (165 aa).

The protein belongs to the trt14 isomerase family. In terms of assembly, homodimer.

It functions in the pathway secondary metabolite biosynthesis; terpenoid biosynthesis. In terms of biological role, part of the gene cluster that mediates the biosynthesis of calidodehydroaustin, a fungal meroterpenoid. The first step of the pathway is the synthesis of 3,5-dimethylorsellinic acid by the polyketide synthase ausA. 3,5-dimethylorsellinic acid is then prenylated by the polyprenyl transferase ausN. Further epoxidation by the FAD-dependent monooxygenase ausM and cyclization by the probable terpene cyclase ausL lead to the formation of protoaustinoid A. Protoaustinoid A is then oxidized to spiro-lactone preaustinoid A3 by the combined action of the FAD-binding monooxygenases ausB and ausC, and the dioxygenase ausE. Acid-catalyzed keto-rearrangement and ring contraction of the tetraketide portion of preaustinoid A3 by ausJ lead to the formation of preaustinoid A4. The aldo-keto reductase ausK, with the help of ausH, is involved in the next step by transforming preaustinoid A4 into isoaustinone which is in turn hydroxylated by the P450 monooxygenase ausI to form austinolide. The cytochrome P450 monooxygenase ausG modifies austinolide to austinol. Austinol is further acetylated to austin by the O-acetyltransferase ausP, which spontaneously changes to dehydroaustin. The cytochrome P450 monooxygenase ausR then converts dehydroaustin is into 7-dehydrodehydroaustin. The hydroxylation catalyzed by ausR permits the O-acetyltransferase ausQ to add an additional acetyl group to the molecule, leading to the formation of acetoxydehydroaustin. The short chain dehydrogenase ausT catalyzes the reduction of the double bond present between carbon atoms 1 and 2 to convert 7-dehydrodehydroaustin into 1,2-dihydro-7-hydroxydehydroaustin. AusQ catalyzes not only an acetylation reaction but also the addition of the PKS ausV diketide product to 1,2-dihydro-7-hydroxydehydroaustin, forming precalidodehydroaustin. Finally, the iron/alpha-ketoglutarate-dependent dioxygenase converts precalidodehydroaustin into calidodehydroaustin. This chain is Austinoid biosynthesis cluster protein J, found in Aspergillus calidoustus.